Here is a 178-residue protein sequence, read N- to C-terminus: ATP-dependent protease subunit HslV (178 aa).

Residue T5 is part of the active site. Positions 161, 164, and 167 each coordinate Na(+).

This sequence belongs to the peptidase T1B family. HslV subfamily. A double ring-shaped homohexamer of HslV is capped on each side by a ring-shaped HslU homohexamer. The assembly of the HslU/HslV complex is dependent on binding of ATP.

It is found in the cytoplasm. It carries out the reaction ATP-dependent cleavage of peptide bonds with broad specificity.. With respect to regulation, allosterically activated by HslU binding. Protease subunit of a proteasome-like degradation complex believed to be a general protein degrading machinery. The chain is ATP-dependent protease subunit HslV from Aliarcobacter butzleri (strain RM4018) (Arcobacter butzleri).